A 436-amino-acid polypeptide reads, in one-letter code: UDP-N-acetylmuramate--L-alanine ligase (436 aa).

108–114 (GAHGKTS) provides a ligand contact to ATP.

Belongs to the MurCDEF family.

The protein resides in the cytoplasm. The catalysed reaction is UDP-N-acetyl-alpha-D-muramate + L-alanine + ATP = UDP-N-acetyl-alpha-D-muramoyl-L-alanine + ADP + phosphate + H(+). Its pathway is cell wall biogenesis; peptidoglycan biosynthesis. Cell wall formation. This is UDP-N-acetylmuramate--L-alanine ligase from Bacillus cytotoxicus (strain DSM 22905 / CIP 110041 / 391-98 / NVH 391-98).